A 147-amino-acid chain; its full sequence is Large ribosomal subunit protein bL9 (147 aa).

The protein belongs to the bacterial ribosomal protein bL9 family.

Binds to the 23S rRNA. The sequence is that of Large ribosomal subunit protein bL9 from Phocaeicola vulgatus (strain ATCC 8482 / DSM 1447 / JCM 5826 / CCUG 4940 / NBRC 14291 / NCTC 11154) (Bacteroides vulgatus).